Here is a 446-residue protein sequence, read N- to C-terminus: ATP-dependent protease ATPase subunit HslU (446 aa).

ATP contacts are provided by residues I18, 60 to 65, D259, E324, and R396; that span reads GVGKTE.

It belongs to the ClpX chaperone family. HslU subfamily. As to quaternary structure, a double ring-shaped homohexamer of HslV is capped on each side by a ring-shaped HslU homohexamer. The assembly of the HslU/HslV complex is dependent on binding of ATP.

The protein resides in the cytoplasm. ATPase subunit of a proteasome-like degradation complex; this subunit has chaperone activity. The binding of ATP and its subsequent hydrolysis by HslU are essential for unfolding of protein substrates subsequently hydrolyzed by HslV. HslU recognizes the N-terminal part of its protein substrates and unfolds these before they are guided to HslV for hydrolysis. This Baumannia cicadellinicola subsp. Homalodisca coagulata protein is ATP-dependent protease ATPase subunit HslU.